We begin with the raw amino-acid sequence, 173 residues long: Dual-action ribosomal maturation protein DarP (173 aa).

This sequence belongs to the DarP family.

Its subcellular location is the cytoplasm. Its function is as follows. Member of a network of 50S ribosomal subunit biogenesis factors which assembles along the 30S-50S interface, preventing incorrect 23S rRNA structures from forming. Promotes peptidyl transferase center (PTC) maturation. This Pseudomonas putida (strain W619) protein is Dual-action ribosomal maturation protein DarP.